We begin with the raw amino-acid sequence, 415 residues long: Corticotropin-releasing factor receptor 1 (415 aa).

A signal peptide spans 1 to 24 (MLLAKTPCLLLVQVIAAGISFALT). At 25–111 (SLQDQCETLQ…CQEILKQEKK (87 aa)) the chain is on the extracellular side. 3 cysteine pairs are disulfide-bonded: Cys30/Cys54, Cys44/Cys87, and Cys68/Cys102. Residues Asn38, Asn45, Asn78, and Asn90 are each glycosylated (N-linked (GlcNAc...) asparagine). Residues 112–142 (TKVHYHIAIVINFLGHSISLCALLVAFILFL) form a helical membrane-spanning segment. At 143–149 (RLRSIRC) the chain is on the cytoplasmic side. The chain crosses the membrane as a helical span at residues 150 to 174 (LRNIIHWNLITAFILRNVTWFVMQL). Over 175–189 (TLSHEAHDSNVVWCR) the chain is Extracellular. Cysteines 188 and 258 form a disulfide. Residues 190–218 (LVTIAHNYFYVTNFFWMFGEGCYLHTAIV) traverse the membrane as a helical segment. The Cytoplasmic portion of the chain corresponds to 219 to 225 (LTYSTDK). The helical transmembrane segment at 226 to 253 (LRKWMFICIGWCIPFPIIVAWAIGKLYY) threads the bilayer. Topologically, residues 254–269 (DNEKCWFGKKAGVYTD) are extracellular. The helical transmembrane segment at 270-295 (FIYQGPVILVLLINFIFLFNIVRILM) threads the bilayer. The Cytoplasmic segment spans residues 296-306 (TKLRASTTSET). Residues 307–331 (IQYRKAVKATLVLLPLLGITYMLFF) traverse the membrane as a helical segment. Over 332–338 (VTPGEDE) the chain is Extracellular. Residues 339–368 (ISRIVFIYFNSFLQSFQGFFVSVFYCFLNS) form a helical membrane-spanning segment. Residues 369 to 415 (EVRSAVRKRWHRWQDKHSIRARVARAMSIPTSPTRISFHSIKQSSAI) are Cytoplasmic-facing.

The protein belongs to the G-protein coupled receptor 2 family. Interacts (via N-terminal extracellular domain) with CRF and UCN.

Its subcellular location is the cell membrane. Functionally, G-protein coupled receptor for CRH (corticotropin-releasing factor) and UCN (urocortin). Has high affinity for CRH and UCN. Ligand binding causes a conformation change that triggers signaling via guanine nucleotide-binding proteins (G proteins) and down-stream effectors, such as adenylate cyclase. Promotes the activation of adenylate cyclase, leading to increased intracellular cAMP levels. This is Corticotropin-releasing factor receptor 1 (crhr1) from Xenopus laevis (African clawed frog).